The primary structure comprises 198 residues: Recombination protein RecR (198 aa).

The C4-type zinc-finger motif lies at 58-73 (CSVCGNFTDKDPCAIC). In terms of domain architecture, Toprim spans 81-175 (NTICVVEHPK…KVTRIAHGIP (95 aa)).

Belongs to the RecR family.

Its function is as follows. May play a role in DNA repair. It seems to be involved in an RecBC-independent recombinational process of DNA repair. It may act with RecF and RecO. The protein is Recombination protein RecR of Clostridium tetani (strain Massachusetts / E88).